The following is a 263-amino-acid chain: Lens fiber major intrinsic protein (263 aa).

Over 1-9 the chain is Cytoplasmic; the sequence is MWEFRSFSF. The chain crosses the membrane as a helical span at residues 10–29; the sequence is WRAVFAEFFGTMFYVFFGLG. Over 30–41 the chain is Extracellular; that stretch reads ASLKWAAGPANV. A helical transmembrane segment spans residues 42-59; it reads LVIALAFGLVLATMVQSI. At 60–61 the chain is on the cytoplasmic side; that stretch reads GH. Positions 62-77 form an intramembrane region, discontinuously helical; that stretch reads VSGAHINPAVTFAFLI. The NPA 1 motif lies at 68-70; the sequence is NPA. Residues 78 to 82 are Cytoplasmic-facing; that stretch reads GSQMS. The chain crosses the membrane as a helical span at residues 83–106; sequence LFRAIFYIAAQLLGAVAGAAVLYG. Over 107–127 the chain is Extracellular; that stretch reads VTPAAIRGNLALNTLHPGVSL. Residues 128-148 form a helical membrane-spanning segment; the sequence is GQATTVEIFLTLQFVLCIFAT. Over 149–156 the chain is Cytoplasmic; sequence YDERRNGR. Residues 157–175 form a helical membrane-spanning segment; it reads LGSVSLAIGFSLTLGHLFG. Residues 176–178 are Extracellular-facing; sequence LYY. An intramembrane region (discontinuously helical) is located at residues 179-193; that stretch reads TGASMNPARSFAPAV. The NPA 2 signature appears at 184–186; the sequence is NPA. The Extracellular segment spans residues 194–200; that stretch reads LTRNFTN. The chain crosses the membrane as a helical span at residues 201-222; it reads HWVYWVGPIIGGALGGLVYDFI. The Cytoplasmic segment spans residues 223–263; the sequence is LFPRMRGLSERLSILKGARPAEPEGQQEATGEPIELKTQSL. Positions 227 to 237 are interaction with CALM; that stretch reads MRGLSERLSIL. The tract at residues 241–263 is disordered; it reads RPAEPEGQQEATGEPIELKTQSL.

This sequence belongs to the MIP/aquaporin (TC 1.A.8) family. Homotetramer; each monomer provides an independent water pore. Two homotetramers on opposing membranes can dimerize, forming a cell-cell junction. Interacts with CALM; the calcium-calmodulin/CALM complex interacts with the cytoplasmic domains of two aquaporins, leading to channel closure.

It is found in the cell membrane. Its subcellular location is the cell junction. The enzyme catalyses H2O(in) = H2O(out). Its activity is regulated as follows. The water channel activity is inhibited by calcium through calmodulin/CALM. Functionally, aquaporins form homotetrameric transmembrane channels, with each monomer independently mediating water transport across the plasma membrane along its osmotic gradient. Specifically expressed in lens fiber cells, this aquaporin is crucial for maintaining lens water homeostasis and transparency. Beyond water permeability, it also acts as a cell-to-cell adhesion molecule, forming thin junctions between lens fiber cells that are essential for maintaining the ordered structure and transparency of the lens. This Lithobates pipiens (Northern leopard frog) protein is Lens fiber major intrinsic protein.